A 157-amino-acid chain; its full sequence is D-aminoacyl-tRNA deacylase (157 aa).

The short motif at 137 to 138 is the Gly-cisPro motif, important for rejection of L-amino acids element; that stretch reads GP.

It belongs to the DTD family. Homodimer.

The protein localises to the cytoplasm. It catalyses the reaction glycyl-tRNA(Ala) + H2O = tRNA(Ala) + glycine + H(+). The catalysed reaction is a D-aminoacyl-tRNA + H2O = a tRNA + a D-alpha-amino acid + H(+). In terms of biological role, an aminoacyl-tRNA editing enzyme that deacylates mischarged D-aminoacyl-tRNAs. Also deacylates mischarged glycyl-tRNA(Ala), protecting cells against glycine mischarging by AlaRS. Acts via tRNA-based rather than protein-based catalysis; rejects L-amino acids rather than detecting D-amino acids in the active site. By recycling D-aminoacyl-tRNA to D-amino acids and free tRNA molecules, this enzyme counteracts the toxicity associated with the formation of D-aminoacyl-tRNA entities in vivo and helps enforce protein L-homochirality. This chain is D-aminoacyl-tRNA deacylase, found in Cyanothece sp. (strain PCC 7425 / ATCC 29141).